A 239-amino-acid chain; its full sequence is Ribonuclease 3 (239 aa).

Positions 12 to 137 (RAKLEGLIGH…LIAAIYLDGG (126 aa)) constitute an RNase III domain. Glu50 serves as a coordination point for Mg(2+). Asp54 is an active-site residue. Mg(2+) is bound by residues Asp123 and Glu126. The active site involves Glu126. The DRBM domain occupies 162-231 (DAKTELQEWS…ATKMLEREGI (70 aa)).

The protein belongs to the ribonuclease III family. Homodimer. It depends on Mg(2+) as a cofactor.

It localises to the cytoplasm. The catalysed reaction is Endonucleolytic cleavage to 5'-phosphomonoester.. Digests double-stranded RNA. Involved in the processing of primary rRNA transcript to yield the immediate precursors to the large and small rRNAs (23S and 16S). Processes some mRNAs, and tRNAs when they are encoded in the rRNA operon. Processes pre-crRNA and tracrRNA of type II CRISPR loci if present in the organism. This chain is Ribonuclease 3, found in Rhizobium johnstonii (strain DSM 114642 / LMG 32736 / 3841) (Rhizobium leguminosarum bv. viciae).